Here is a 598-residue protein sequence, read N- to C-terminus: (-)-endo-fenchol synthase, chloroplastic (598 aa).

The transit peptide at 1–34 (MWSTISISMNVAILKKPLNFLHNSNNKASNPRCV) directs the protein to the chloroplast. Mg(2+)-binding residues include aspartate 351, aspartate 355, aspartate 495, threonine 499, and glutamate 503. The short motif at 351–355 (DDVYD) is the DDXXD motif element.

The protein belongs to the terpene synthase family. It depends on Mg(2+) as a cofactor. Requires Mn(2+) as cofactor.

It is found in the plastid. The protein localises to the chloroplast. The catalysed reaction is (2E)-geranyl diphosphate + H2O = (1S,2S,4R)-endo-fenchol + diphosphate. It participates in secondary metabolite biosynthesis; terpenoid biosynthesis. Its function is as follows. Monoterpene synthase that catalyzes the formation of fenchol from geranyl diphosphate. The polypeptide is (-)-endo-fenchol synthase, chloroplastic (FES) (Ocimum basilicum (Sweet basil)).